The chain runs to 117 residues: Large ribosomal subunit protein bL20c (117 aa).

Belongs to the bacterial ribosomal protein bL20 family.

It is found in the plastid. The protein resides in the chloroplast. Its function is as follows. Binds directly to 23S ribosomal RNA and is necessary for the in vitro assembly process of the 50S ribosomal subunit. It is not involved in the protein synthesizing functions of that subunit. In Populus trichocarpa (Western balsam poplar), this protein is Large ribosomal subunit protein bL20c.